A 490-amino-acid chain; its full sequence is MSLWSSVKFAQRYAQLPKVFYRLVTPQPLDNSRWVIWNGELAQGFALPKHADDPQLLSVFSGAEPFSAFKPLAMKYAGHQFGVYNPDLGDGRGLLLGEMQNQQGQWFDIHLKGAGLTPFSRMGDGRAVLRSTIREYLCSEAMAALGIETTRALGMTVSDTPVYREQVEQGACLIRLAQTHIRFGHFEHFFYTEQYDELRLLADNVIEWYMPECTAHDKPYLAMFEQVVARTATMIAQWQAVGFAHGVMNTDNMSILGQTFDYGPFGFLDDYEPGYICNHSDYQGRYAFDQQPRVALWNLSALAHALSPLVERDDLELALAQYEPTLGKVFSQLMRQKLGLLSQQEGDSELFNAMFTLLAENHTDYTRFFRTLSQLDSEGAQTVIDLFIDRDAARGWLSRYLERVALEQTASGEAKSAQQRCEQMRAVNPKYILRNYLAQQAIDKAQQGDFSEVHTLAKLLKNPYDEQAEMEAYAHLPPEWGKKMVISCSS.

Residues glycine 89, glycine 91, arginine 92, lysine 112, aspartate 124, glycine 125, arginine 175, and arginine 182 each coordinate ATP. Aspartate 251 acts as the Proton acceptor in catalysis. Mg(2+) contacts are provided by asparagine 252 and aspartate 261. Aspartate 261 provides a ligand contact to ATP.

It belongs to the SELO family. It depends on Mg(2+) as a cofactor. Mn(2+) serves as cofactor.

The enzyme catalyses L-seryl-[protein] + ATP = 3-O-(5'-adenylyl)-L-seryl-[protein] + diphosphate. The catalysed reaction is L-threonyl-[protein] + ATP = 3-O-(5'-adenylyl)-L-threonyl-[protein] + diphosphate. It carries out the reaction L-tyrosyl-[protein] + ATP = O-(5'-adenylyl)-L-tyrosyl-[protein] + diphosphate. It catalyses the reaction L-histidyl-[protein] + UTP = N(tele)-(5'-uridylyl)-L-histidyl-[protein] + diphosphate. The enzyme catalyses L-seryl-[protein] + UTP = O-(5'-uridylyl)-L-seryl-[protein] + diphosphate. The catalysed reaction is L-tyrosyl-[protein] + UTP = O-(5'-uridylyl)-L-tyrosyl-[protein] + diphosphate. Functionally, nucleotidyltransferase involved in the post-translational modification of proteins. It can catalyze the addition of adenosine monophosphate (AMP) or uridine monophosphate (UMP) to a protein, resulting in modifications known as AMPylation and UMPylation. The protein is Protein nucleotidyltransferase YdiU of Vibrio vulnificus (strain YJ016).